The chain runs to 120 residues: NAD(P)H-quinone oxidoreductase subunit 3 (120 aa).

3 helical membrane-spanning segments follow: residues 1 to 21 (MFVLSGYEYLLGFFIICSLVP), 64 to 84 (MFALVFVVFDVETVFLYPWAV), and 89 to 109 (LGLLAFIEALVFIAILVVALV).

Belongs to the complex I subunit 3 family. As to quaternary structure, NDH-1 can be composed of about 15 different subunits; different subcomplexes with different compositions have been identified which probably have different functions.

Its subcellular location is the cellular thylakoid membrane. The catalysed reaction is a plastoquinone + NADH + (n+1) H(+)(in) = a plastoquinol + NAD(+) + n H(+)(out). It catalyses the reaction a plastoquinone + NADPH + (n+1) H(+)(in) = a plastoquinol + NADP(+) + n H(+)(out). NDH-1 shuttles electrons from an unknown electron donor, via FMN and iron-sulfur (Fe-S) centers, to quinones in the respiratory and/or the photosynthetic chain. The immediate electron acceptor for the enzyme in this species is believed to be plastoquinone. Couples the redox reaction to proton translocation, and thus conserves the redox energy in a proton gradient. Cyanobacterial NDH-1 also plays a role in inorganic carbon-concentration. The sequence is that of NAD(P)H-quinone oxidoreductase subunit 3 from Nostoc punctiforme (strain ATCC 29133 / PCC 73102).